Consider the following 88-residue polypeptide: Small ribosomal subunit protein uS17 (88 aa).

This sequence belongs to the universal ribosomal protein uS17 family. Part of the 30S ribosomal subunit.

One of the primary rRNA binding proteins, it binds specifically to the 5'-end of 16S ribosomal RNA. This Lactobacillus gasseri (strain ATCC 33323 / DSM 20243 / BCRC 14619 / CIP 102991 / JCM 1131 / KCTC 3163 / NCIMB 11718 / NCTC 13722 / AM63) protein is Small ribosomal subunit protein uS17.